The chain runs to 743 residues: Adhesion defective protein 2 (743 aa).

Positions 1-36 (MADPGLRSGVGLPSQQGQKHDLQKDQKQPHVNNADR) are disordered. Positions 18 to 28 (QKHDLQKDQKQ) are enriched in basic and acidic residues. The LisH domain maps to 38–70 (TQSLLNSYIYDYLIKKDYCEAARAFGREAQVQT). Disordered regions lie at residues 79–127 (NSLA…PPPP), 264–361 (LQSV…QYPV), 379–426 (RNPH…YGFS), and 476–692 (KERK…KSSD). A Phosphoserine modification is found at Ser89. The segment covering 98-114 (ISNNESSDENMNVNNGN) has biased composition (polar residues). The segment covering 264–281 (LQSVQQQQKQHQQKKTPQ) has biased composition (low complexity). Polar residues-rich tracts occupy residues 282 to 297 (SGST…QPTT), 315 to 353 (IPSS…DTTG), 390 to 399 (PSSTLPQQQK), 408 to 426 (QQPS…YGFS), and 482 to 500 (TSAS…SSVA). Residues 501 to 520 (KTKSTTPKSTDTPTEATTSP) are compositionally biased toward low complexity. Polar residues-rich tracts occupy residues 521–544 (VKVS…NMPM) and 556–566 (DHPSNYSNLIE). Positions 567–578 (NSSTSDTNNADN) are enriched in low complexity. The span at 586-602 (WQLQQTHSSRPTPNASS) shows a compositional bias: polar residues. Residues 612–631 (PSSANSNAPTPAPTVNTTNP) show a composition bias toward low complexity. A compositionally biased stretch (polar residues) spans 661-670 (DNQNQSGKSN). The span at 671 to 688 (PDTSATPSAPTESTTVAT) shows a compositional bias: low complexity.

Belongs to the FLO8 family.

Its subcellular location is the cytoplasm. The protein resides in the nucleus. In terms of biological role, probable transcriptional regulator involved in cell adhesion. The protein is Adhesion defective protein 2 (adn2) of Schizosaccharomyces pombe (strain 972 / ATCC 24843) (Fission yeast).